A 172-amino-acid polypeptide reads, in one-letter code: uncharacterized protein (172 aa).

The signal sequence occupies residues 1-21; that stretch reads MMKFKKCLLPVAMLASFTLAG. Cys22 is lipidated: N-palmitoyl cysteine. The S-diacylglycerol cysteine moiety is linked to residue Cys22.

The protein resides in the cell membrane. This is an uncharacterized protein from Escherichia coli O157:H7.